Consider the following 98-residue polypeptide: NADH-ubiquinone oxidoreductase chain 4L (98 aa).

The next 3 helical transmembrane spans lie at 1–21 (MTMV…GLLM), 29–49 (SLLC…VTIL), and 61–81 (IVLL…LVMV).

Belongs to the complex I subunit 4L family. In terms of assembly, core subunit of respiratory chain NADH dehydrogenase (Complex I) which is composed of 45 different subunits.

Its subcellular location is the mitochondrion inner membrane. It catalyses the reaction a ubiquinone + NADH + 5 H(+)(in) = a ubiquinol + NAD(+) + 4 H(+)(out). Functionally, core subunit of the mitochondrial membrane respiratory chain NADH dehydrogenase (Complex I) which catalyzes electron transfer from NADH through the respiratory chain, using ubiquinone as an electron acceptor. Part of the enzyme membrane arm which is embedded in the lipid bilayer and involved in proton translocation. This Monachus monachus (Mediterranean monk seal) protein is NADH-ubiquinone oxidoreductase chain 4L (MT-ND4L).